An 87-amino-acid chain; its full sequence is Chaperone NapD (87 aa).

The protein belongs to the NapD family. In terms of assembly, interacts with the cytoplasmic NapA precursor.

It localises to the cytoplasm. Chaperone for NapA, the catalytic subunit of the periplasmic nitrate reductase. It binds directly and specifically to the twin-arginine signal peptide of NapA, preventing premature interaction with the Tat translocase and premature export. The sequence is that of Chaperone NapD from Escherichia coli O157:H7.